An 80-amino-acid chain; its full sequence is Serine palmitoyltransferase small subunit A-B (80 aa).

At 1-21 (MKVSCEDVNGPRSSLGRAWNH) the chain is on the cytoplasmic side. Residues 22–38 (VSWLYYQYLLVTALYML) form a helical membrane-spanning segment. The Lumenal portion of the chain corresponds to 39–43 (EPWER). Residues 44-66 (TVFNSMLVSIVGMALYTGYIFMP) traverse the membrane as a helical segment. Topologically, residues 67 to 80 (QHILAILHYFEIVQ) are cytoplasmic.

The protein belongs to the SPTSS family. SPTSSA subfamily. In terms of assembly, component of the serine palmitoyltransferase (SPT) complex, which is composed of SPTLC1, SPTLC2 or SPTLC3 and SPTSSA or SPTSSB. The heterodimer consisting of SPTLC1 and SPTLC2/SPTLC3 forms the catalytic core of the enzyme, while SPTSSA or SPTSSB subunits determine substrate specificity. SPT also interacts with ORMDL proteins, especially ORMDL3, which negatively regulate SPT activity in the presence of ceramides.

It is found in the endoplasmic reticulum membrane. Its pathway is lipid metabolism; sphingolipid metabolism. Its function is as follows. Component of the serine palmitoyltransferase multisubunit enzyme (SPT) that catalyzes the initial and rate-limiting step in sphingolipid biosynthesis by condensing L-serine and activated acyl-CoA (most commonly palmitoyl-CoA) to form long-chain bases. The SPT complex is composed of SPTLC1, SPTLC2 or SPTLC3 and SPTSSA or SPTSSB. Within this complex, the heterodimer consisting of SPTLC1 and SPTLC2/SPTLC3 forms the catalytic core. Within the SPT complex, SPTSSA stimulates the catalytic activity and plays a role in substrate specificity, which depends upon the overall complex composition. The SPTLC1-SPTLC2-SPTSSA complex shows a strong preference for C16-CoA substrate, while the SPTLC1-SPTLC3-SPTSSA isozyme uses both C14-CoA and C16-CoA as substrates, with a slight preference for C14-CoA. Independently of its action as a SPT component, may be involved in MBOAT7 localization to mitochondria-associated membranes, a membrane bridge between the endoplasmic reticulum and mitochondria, may hence affect MBOAT7-catalyzed incorporation of arachidonic acid into phosphatidylinositol. This is Serine palmitoyltransferase small subunit A-B (sptssa-b) from Xenopus laevis (African clawed frog).